The primary structure comprises 320 residues: 4-diphosphocytidyl-2-C-methyl-D-erythritol kinase (320 aa).

Lysine 20 is a catalytic residue. 112 to 122 serves as a coordination point for ATP; that stretch reads PVAGGMGGGSA. Aspartate 154 is an active-site residue.

It belongs to the GHMP kinase family. IspE subfamily.

The catalysed reaction is 4-CDP-2-C-methyl-D-erythritol + ATP = 4-CDP-2-C-methyl-D-erythritol 2-phosphate + ADP + H(+). The protein operates within isoprenoid biosynthesis; isopentenyl diphosphate biosynthesis via DXP pathway; isopentenyl diphosphate from 1-deoxy-D-xylulose 5-phosphate: step 3/6. Its function is as follows. Catalyzes the phosphorylation of the position 2 hydroxy group of 4-diphosphocytidyl-2C-methyl-D-erythritol. This Pseudarthrobacter chlorophenolicus (strain ATCC 700700 / DSM 12829 / CIP 107037 / JCM 12360 / KCTC 9906 / NCIMB 13794 / A6) (Arthrobacter chlorophenolicus) protein is 4-diphosphocytidyl-2-C-methyl-D-erythritol kinase.